Reading from the N-terminus, the 634-residue chain is BTB/POZ domain-containing protein At1g03010 (634 aa).

Residues 38-103 (SDLTVQVGSS…CYGINIEINL (66 aa)) enclose the BTB domain. Positions 205–503 (DWWGKSLAVL…VQVLYFEQIR (299 aa)) constitute an NPH3 domain. Position 444 is a phosphotyrosine (Tyr444). A coiled-coil region spans residues 542-580 (RDNYASVRRENRELKLEVARMRMRLTDLEKDHISIKQEL).

Belongs to the NPH3 family.

The protein operates within protein modification; protein ubiquitination. Its function is as follows. May act as a substrate-specific adapter of an E3 ubiquitin-protein ligase complex (CUL3-RBX1-BTB) which mediates the ubiquitination and subsequent proteasomal degradation of target proteins. In Arabidopsis thaliana (Mouse-ear cress), this protein is BTB/POZ domain-containing protein At1g03010.